A 143-amino-acid polypeptide reads, in one-letter code: Large ribosomal subunit protein uL13 (143 aa).

It belongs to the universal ribosomal protein uL13 family. As to quaternary structure, part of the 50S ribosomal subunit.

Functionally, this protein is one of the early assembly proteins of the 50S ribosomal subunit, although it is not seen to bind rRNA by itself. It is important during the early stages of 50S assembly. The protein is Large ribosomal subunit protein uL13 of Clostridioides difficile (strain 630) (Peptoclostridium difficile).